We begin with the raw amino-acid sequence, 90 residues long: Acylphosphatase (90 aa).

Residues 3–90 (RVLIKLTGKV…DIYLDFSIVR (88 aa)) enclose the Acylphosphatase-like domain. Active-site residues include R18 and N36.

It belongs to the acylphosphatase family.

The catalysed reaction is an acyl phosphate + H2O = a carboxylate + phosphate + H(+). The polypeptide is Acylphosphatase (acyP) (Shewanella oneidensis (strain ATCC 700550 / JCM 31522 / CIP 106686 / LMG 19005 / NCIMB 14063 / MR-1)).